The sequence spans 1383 residues: Palladin (1383 aa).

3 disordered regions span residues 1 to 22 (MSGT…EESK), 52 to 169 (DSET…SQLC), and 183 to 238 (FKAA…KSPG). Residues 78-96 (HPSHKETKLGEHASRRPQD) are compositionally biased toward basic and acidic residues. Positions 191-201 (RSPNGESSSPD) are enriched in polar residues. The residue at position 192 (S192) is a Phosphoserine. The segment covering 210–223 (QPSALLSASASQSP) has biased composition (low complexity). An Ig-like C2-type 1 domain is found at 271-360 (PRFIQKLRSQ…GSDTTSAEVF (90 aa)). Cysteines 292 and 344 form a disulfide. S401 is subject to Phosphoserine. Residues 440–539 (PPVFTKELQN…ATSTAQLVVT (100 aa)) enclose the Ig-like C2-type 2 domain. An intrachain disulfide couples C462 to C521. Residues 562–566 (FPPPP) are interaction with VASP. Disordered stretches follow at residues 609–653 (ETNG…LAKP), 673–728 (AGAR…SSGS), and 740–846 (AQNL…RFGH). S632 is modified (phosphoserine). Phosphothreonine is present on T635. At S641 the chain carries Phosphoserine. Residues 646–676 (PPPLLAKPKLDPLKLQQLQNQIRLEQEAGAR) form an interaction with LASP1 region. Residues 676–696 (RQPPPAPRSAPPSPPFPPPPA) form an interaction with SORBS2, SPIN90 and SRC region. Over residues 677–697 (QPPPAPRSAPPSPPFPPPPAF) the composition is skewed to pro residues. Phosphoserine is present on residues S684, S688, and S728. The span at 745–763 (PASGHGTPASSPSSSSLPS) shows a compositional bias: low complexity. The interval 766 to 831 (SPTPRQFGRA…PPPPPPLPSP (66 aa)) is interaction with EPS8. The interval 796 to 831 (SPSPPPPPPPVFSPTAAFPVPDVFPLPPPPPPLPSP) is interaction with SORBS2, SPIN90, SRC and PFN1. Pro residues-rich tracts occupy residues 797–807 (PSPPPPPPPVF) and 817–830 (DVFP…PLPS). The interaction with VASP stretch occupies residues 819–823 (FPLPP). Residues 832-846 (GQASHCSSPATRFGH) are compositionally biased toward polar residues. Residues 833–890 (QASHCSSPATRFGHSQTPAAFLSALLPSQPPPAAVNALGLPKGVTPAGFPKKASRTAR) are interaction with ACTN. A phosphoserine mark is found at S893, S979, and S984. The Ig-like C2-type 3 domain maps to 1001–1085 (PFFEMKLKHY…MAANPQGRIS (85 aa)). Positions 1096–1125 (NQRGRSPRSPSGHPHVRRPRSRSRDSGDEN) are disordered. The segment covering 1098 to 1108 (RGRSPRSPSGH) has biased composition (low complexity). S1101, S1104, S1106, and S1116 each carry phosphoserine. At S1118 the chain carries Phosphoserine; by PKB/AKT1. S1121 bears the Phosphoserine mark. 2 Ig-like C2-type domains span residues 1135-1226 (PHFL…LVVA) and 1233-1324 (PPVF…ARLD). 2 interaction with EZR regions span residues 1137–1226 (FLQA…LVVA) and 1236–1326 (FIEK…LDVY). C1156 and C1208 are disulfide-bonded. Residue S1352 is modified to Phosphoserine.

Belongs to the myotilin/palladin family. Interacts with EPS8. Interacts with LASP1. Interacts with VASP. Interacts with ACTN. Interacts with SORBS2. Interacts with PFN1. Interacts with LPP. Interacts with SPIN90. Interacts with SRC. Interacts with EZR. Interacts with RAI14. Phosphorylated predominantly on serines and, to a lesser extent, on tyrosines. Phosphorylation at Ser-1118 by PKB/AKT1 modulates cytoskeletal organization and cell motility. Detected in both muscle and non-muscle tissues. High expression in prostate, ovary, colon, and kidney. Not detected in spleen, skeletal muscle, lung and peripheral blood lymphocytes (at protein level). Protein is overexpressed in FA6, HPAF, IMIM-PC2, SUIT-2 and PancTu-II sporadic pancreatic cancer cell lines.

It is found in the cytoplasm. It localises to the cytoskeleton. The protein resides in the cell junction. Its subcellular location is the focal adhesion. The protein localises to the myofibril. It is found in the sarcomere. It localises to the z line. The protein resides in the cell projection. Its subcellular location is the ruffle. The protein localises to the podosome. It is found in the lamellipodium. It localises to the axon. The protein resides in the growth cone. Its function is as follows. Cytoskeletal protein required for organization of normal actin cytoskeleton. Roles in establishing cell morphology, motility, cell adhesion and cell-extracellular matrix interactions in a variety of cell types. May function as a scaffolding molecule with the potential to influence both actin polymerization and the assembly of existing actin filaments into higher-order arrays. Binds to proteins that bind to either monomeric or filamentous actin. Localizes at sites where active actin remodeling takes place, such as lamellipodia and membrane ruffles. Different isoforms may have functional differences. Involved in the control of morphological and cytoskeletal changes associated with dendritic cell maturation. Involved in targeting ACTN to specific subcellular foci. The chain is Palladin (PALLD) from Homo sapiens (Human).